We begin with the raw amino-acid sequence, 97 residues long: Co-chaperonin GroES (97 aa).

The protein belongs to the GroES chaperonin family. In terms of assembly, heptamer of 7 subunits arranged in a ring. Interacts with the chaperonin GroEL.

It localises to the cytoplasm. Functionally, together with the chaperonin GroEL, plays an essential role in assisting protein folding. The GroEL-GroES system forms a nano-cage that allows encapsulation of the non-native substrate proteins and provides a physical environment optimized to promote and accelerate protein folding. GroES binds to the apical surface of the GroEL ring, thereby capping the opening of the GroEL channel. The polypeptide is Co-chaperonin GroES (Pseudomonas aeruginosa (strain LESB58)).